We begin with the raw amino-acid sequence, 642 residues long: Serotransferrin (642 aa).

2 Transferrin-like domains span residues 1 to 280 (GIKE…SLKK) and 290 to 621 (IKWC…SLRQ). 2 residues coordinate Fe(3+): Asp25 and Tyr54. Intrachain disulfides connect Cys77–Cys158, Cys121–Cys137, and Cys186–Cys200. Hydrogencarbonate contacts are provided by Thr79, Lys83, Ala85, and Gly86. Residue Tyr152 participates in Fe(3+) binding. Position 208 (His208) interacts with Fe(3+). Cystine bridges form between Cys293-Cys329 and Cys303-Cys320. Asp344 provides a ligand contact to Fe(3+). Intrachain disulfides connect Cys354–Cys633, Cys369–Cys594, Cys402–Cys480, Cys426–Cys622, Cys436–Cys450, Cys447–Cys463, and Cys520–Cys535. An N-linked (GlcNAc...) asparagine glycan is attached at Asn365. Position 379 (Tyr379) interacts with Fe(3+). Positions 404, 408, 410, and 411 each coordinate hydrogencarbonate. Tyr474 serves as a coordination point for Fe(3+). His543 contacts Fe(3+).

Belongs to the transferrin family. As to quaternary structure, monomer. Brain and liver; to a lesser extent in kidney and heart.

It is found in the secreted. In terms of biological role, transferrins are iron binding transport proteins which can bind two Fe(3+) ions in association with the binding of an anion, usually bicarbonate. This chain is Serotransferrin (tf), found in Gadus morhua (Atlantic cod).